Reading from the N-terminus, the 186-residue chain is Potassium-transporting ATPase KdpC subunit (186 aa).

Residues 9 to 29 (AAVVLFGGCLLVLGLLYPLAM) traverse the membrane as a helical segment.

Belongs to the KdpC family. The system is composed of three essential subunits: KdpA, KdpB and KdpC.

The protein localises to the cell membrane. Functionally, part of the high-affinity ATP-driven potassium transport (or Kdp) system, which catalyzes the hydrolysis of ATP coupled with the electrogenic transport of potassium into the cytoplasm. This subunit acts as a catalytic chaperone that increases the ATP-binding affinity of the ATP-hydrolyzing subunit KdpB by the formation of a transient KdpB/KdpC/ATP ternary complex. The polypeptide is Potassium-transporting ATPase KdpC subunit (Methanosphaerula palustris (strain ATCC BAA-1556 / DSM 19958 / E1-9c)).